An 86-amino-acid polypeptide reads, in one-letter code: Hepcidin-1 (86 aa).

Residues 1–22 (MKAFSVAVVLVIACMFILESTA) form the signal peptide. A propeptide spanning residues 23–59 (VPFSEVRTEEVGSFDSPVGEHQQPGGESMHLPEPFRF) is cleaved from the precursor. 4 disulfide bridges follow: C68-C84, C71-C74, C72-C80, and C75-C83.

It belongs to the hepcidin family.

The protein resides in the secreted. Functionally, seems to act as a signaling molecule involved in the maintenance of iron homeostasis. Seems to be required in conjunction with HFE to regulate both intestinal iron absorption and iron storage in macrophages. May also have antimicrobial activity. This Salmo salar (Atlantic salmon) protein is Hepcidin-1 (hamp1).